The following is a 196-amino-acid chain: Probable calcium-binding protein CML32 (196 aa).

EF-hand domains are found at residues 30-65, 121-156, and 159-194; these read LNAV…LGLV, DEEE…LGLP, and GSLA…ITVW. 14 residues coordinate Ca(2+): D43, N45, D47, E49, E54, D134, D136, D138, E145, D172, N174, D176, R178, and E183.

Functionally, potential calcium sensor. The sequence is that of Probable calcium-binding protein CML32 (CML32) from Oryza sativa subsp. japonica (Rice).